The sequence spans 386 residues: MAALQYLESLKNTHPELGEWYNSLADLYQKKLWHQLTLKLEQFIALAVFQAGDALIQFYHNFITDFETKINLLKLAHFAVVVSRQYSEKEAAVSYLESVIEKLRATKEPRITEPIIYIETQKALFKLEQGDQKECKKILDDGKSSLDSMTDIDPSVYANFYWVSSQYHKCRQEFSDFYKSALLYLAYTSVEDLSESFKLDLAFDLSLSALLGENIYNFGELLAHPILKSLLGTNVEWLYHILQAFNHGDLVQYQELCRVHNASLIAQPALVENEKKLLEKINILCLIEIIFSRPAEDRTIPLSIIAERTKLSIEDVEHLLMKSLSVHLIEGIIDQVNGTIYVSWAQPRVLGIPQIKALRDQLDSWVDKVHTTLLSVEAETPDLVAA.

Ala2 is subject to N-acetylalanine. A PCI domain is found at 173–347; it reads EFSDFYKSAL…GTIYVSWAQP (175 aa).

This sequence belongs to the proteasome subunit S11 family. In terms of assembly, component of the 19S regulatory particle (RP/PA700) lid subcomplex of the 26S proteasome. The 26S proteasome is composed of a core protease (CP), known as the 20S proteasome, capped at one or both ends by the 19S regulatory particle (RP/PA700). The RP/PA700 complex is composed of at least 17 different subunits in two subcomplexes, the base and the lid, which form the portions proximal and distal to the 20S proteolytic core, respectively. In terms of tissue distribution, ubiquitous with highest expression in flowers.

Its function is as follows. Acts as a regulatory subunit of the 26S proteasome which is involved in the ATP-dependent degradation of ubiquitinated proteins. The polypeptide is 26S proteasome non-ATPase regulatory subunit 13 homolog A (RPN9A) (Arabidopsis thaliana (Mouse-ear cress)).